The chain runs to 339 residues: Uracil nucleotide/cysteinyl leukotriene receptor (339 aa).

The Extracellular segment spans residues 1–36 (MNGLEAALPSLTDNSSLAYSEQCGQETPLENMLFAC). The N-linked (GlcNAc...) asparagine glycan is linked to Asn14. The chain crosses the membrane as a helical span at residues 37–57 (FYLLDFILAFVGNALALWLFI). At 58–64 (WDHKSGT) the chain is on the cytoplasmic side. A helical membrane pass occupies residues 65–85 (PANVFLMHLAVADLSCVLVLP). Residues 86–105 (TRLVYHFSGNHWPFGEIPCR) are Extracellular-facing. Cys104 and Cys181 are oxidised to a cystine. The chain crosses the membrane as a helical span at residues 106–126 (LTGFLFYLNMYASIYFLTCIS). Topologically, residues 127 to 147 (ADRFLAIVHPVKSLKLRRPLY) are cytoplasmic. A helical membrane pass occupies residues 148–168 (AHLACAFLWIVVAVAMAPLLV). At 169-195 (SPQTVQTNHTVVCLQLYREKASHHALA) the chain is on the extracellular side. Asn176 carries N-linked (GlcNAc...) asparagine glycosylation. The helical transmembrane segment at 196-216 (SLAVAFTFPFITTVTCYLLII) threads the bilayer. At 217-232 (RSLRQGPRIEKHLKNK) the chain is on the cytoplasmic side. Residues 233 to 253 (AVRMIAMVLAIFLICFVPYHI) traverse the membrane as a helical segment. Residues 254-280 (HRSVYVLHYRGGGTSCAAQRALALGNR) are Extracellular-facing. Residues 281 to 301 (ITSCLTSLNGALDPVMYFFVA) form a helical membrane-spanning segment. At 302-339 (EKFRHALCNLLCSKRLTGPPPSFEGKTNESSLSARSEL) the chain is on the cytoplasmic side.

The protein belongs to the G-protein coupled receptor 1 family.

It localises to the cell membrane. In terms of biological role, dual specificity receptor for uracil nucleotides and cysteinyl leukotrienes (CysLTs). Signals through G(i) and inhibition of adenylyl cyclase. May mediate brain damage by nucleotides and CysLTs following ischemia. The polypeptide is Uracil nucleotide/cysteinyl leukotriene receptor (Mus musculus (Mouse)).